We begin with the raw amino-acid sequence, 42 residues long: Cytochrome b6-f complex subunit 7 (42 aa).

The helical transmembrane segment at 19-37 (AVTCIFMTLFGLSLGFALL) threads the bilayer.

The protein belongs to the PetM family. The 4 large subunits of the cytochrome b6-f complex are cytochrome b6, subunit IV (17 kDa polypeptide, PetD), cytochrome f and the Rieske protein, while the 4 small subunits are PetG, PetL, PetM and PetN. The complex functions as a dimer.

Its subcellular location is the plastid. It is found in the chloroplast thylakoid membrane. Its function is as follows. Component of the cytochrome b6-f complex, which mediates electron transfer between photosystem II (PSII) and photosystem I (PSI), cyclic electron flow around PSI, and state transitions. The polypeptide is Cytochrome b6-f complex subunit 7 (Thalassiosira pseudonana (Marine diatom)).